An 833-amino-acid chain; its full sequence is Glycerol-3-phosphate acyltransferase (833 aa).

Positions 309–314 (CHRSHI) match the HXXXXD motif motif.

It belongs to the GPAT/DAPAT family.

It is found in the cell inner membrane. It carries out the reaction sn-glycerol 3-phosphate + an acyl-CoA = a 1-acyl-sn-glycero-3-phosphate + CoA. It functions in the pathway phospholipid metabolism; CDP-diacylglycerol biosynthesis; CDP-diacylglycerol from sn-glycerol 3-phosphate: step 1/3. This chain is Glycerol-3-phosphate acyltransferase, found in Pseudomonas syringae pv. syringae (strain B728a).